We begin with the raw amino-acid sequence, 101 residues long: NADH-quinone oxidoreductase subunit K (101 aa).

3 consecutive transmembrane segments (helical) span residues 4–24 (LTHF…GIFL), 30–50 (IILL…FIAF), and 61–81 (IFVF…LAIL).

The protein belongs to the complex I subunit 4L family. As to quaternary structure, NDH-1 is composed of 14 different subunits. Subunits NuoA, H, J, K, L, M, N constitute the membrane sector of the complex.

Its subcellular location is the cell inner membrane. The enzyme catalyses a quinone + NADH + 5 H(+)(in) = a quinol + NAD(+) + 4 H(+)(out). NDH-1 shuttles electrons from NADH, via FMN and iron-sulfur (Fe-S) centers, to quinones in the respiratory chain. The immediate electron acceptor for the enzyme in this species is believed to be ubiquinone. Couples the redox reaction to proton translocation (for every two electrons transferred, four hydrogen ions are translocated across the cytoplasmic membrane), and thus conserves the redox energy in a proton gradient. This Chromobacterium violaceum (strain ATCC 12472 / DSM 30191 / JCM 1249 / CCUG 213 / NBRC 12614 / NCIMB 9131 / NCTC 9757 / MK) protein is NADH-quinone oxidoreductase subunit K.